The primary structure comprises 372 residues: Rab9 effector protein with kelch motifs (372 aa).

Kelch repeat units lie at residues 49 to 95, 100 to 146, 151 to 203, 204 to 250, and 254 to 303; these read KVFI…FLPS, SIWV…TSSA, HLYV…AAGT, KLFI…AAVA, and HVYV…VIPW. Residues 321 to 342 are disordered; it reads LQDEKGDAAEKPETRSGGSREE. The span at 322–342 shows a compositional bias: basic and acidic residues; it reads QDEKGDAAEKPETRSGGSREE. A Kelch 6 repeat occupies 349–372; that stretch reads LCFVFGGMNTEGEIYDDCLVTVVD.

Interacts with PIKFYVE; the interaction recruits RABEPK to the endosomal membrane. Interacts with RAB9 in its GTP-bound conformation. Post-translationally, phosphorylated on Ser residues by PIKFYVE.

It localises to the cytoplasm. It is found in the endosome membrane. Its function is as follows. Rab9 effector required for endosome to trans-Golgi network (TGN) transport. The protein is Rab9 effector protein with kelch motifs (Rabepk) of Rattus norvegicus (Rat).